Here is a 182-residue protein sequence, read N- to C-terminus: GTP cyclohydrolase 1 (182 aa).

3 residues coordinate Zn(2+): cysteine 73, histidine 76, and cysteine 144.

The protein belongs to the GTP cyclohydrolase I family. Homomer.

It catalyses the reaction GTP + H2O = 7,8-dihydroneopterin 3'-triphosphate + formate + H(+). It functions in the pathway cofactor biosynthesis; 7,8-dihydroneopterin triphosphate biosynthesis; 7,8-dihydroneopterin triphosphate from GTP: step 1/1. This Hydrogenobaculum sp. (strain Y04AAS1) protein is GTP cyclohydrolase 1.